A 72-amino-acid chain; its full sequence is Lantibiotic Flvbeta.e (72 aa).

The propeptide at 1–34 is cleaved by FlvT; sequence MNNKEFNMEQFKKLAAVVSEDELDEMLDENVTGA. The lanthionine (Ser-Cys); by FlvM2 cross-link spans 36 to 40; it reads SSIPC. A 2,3-didehydroalanine (Ser); by FlvM2 modification is found at serine 37. 2 positions are modified to 2,3-didehydrobutyrine; by FlvM2: threonine 48 and threonine 49. 3 consecutive cross-links (beta-methyllanthionine (Thr-Cys); by FlvM2) follow at residues 55–61, 63–66, and 67–70; these read TTGFDWC, TGAC, and TTSC.

Post-translationally, contains LL-lanthionine and DL-beta-methyllanthionine, when coepressed in E.coli with the flavecin synthetase FlvM2.

The protein resides in the secreted. Lanthionine-containing peptide antibiotic (lantibiotic) that is probably active on Gram-positive bacteria, since its analog [Del1]Flvbeta.e shows antibacterial activity against Gram-positive bacteria. This activity is not synergistically enhanced by [Del2]Flvalpha.a, an analog of Flvalpha.a, which is encoded by the same operon than Flvbeta.e. The bactericidal activity of lantibiotics is based on depolarization of energized bacterial cytoplasmic membranes, initiated by the formation of aqueous transmembrane pores. This chain is Lantibiotic Flvbeta.e, found in Ruminococcus flavefaciens.